The following is a 108-amino-acid chain: UPF0060 membrane protein CJA_3703 (108 aa).

4 consecutive transmembrane segments (helical) span residues 6–26 (LLFV…YLWL), 31–51 (SIWL…LLTL), 61–81 (AAYG…VDGV), and 85–105 (AYDW…AMGW).

This sequence belongs to the UPF0060 family.

Its subcellular location is the cell inner membrane. The polypeptide is UPF0060 membrane protein CJA_3703 (Cellvibrio japonicus (strain Ueda107) (Pseudomonas fluorescens subsp. cellulosa)).